Reading from the N-terminus, the 60-residue chain is Large ribosomal subunit protein uL30 (60 aa).

The protein belongs to the universal ribosomal protein uL30 family. As to quaternary structure, part of the 50S ribosomal subunit.

This Ligilactobacillus salivarius (strain UCC118) (Lactobacillus salivarius) protein is Large ribosomal subunit protein uL30.